A 680-amino-acid polypeptide reads, in one-letter code: DNA-directed RNA polymerase subunit beta' (680 aa).

Zn(2+) is bound by residues C69, C71, C87, and C90. Positions 489, 491, and 493 each coordinate Mg(2+).

The protein belongs to the RNA polymerase beta' chain family. RpoC1 subfamily. As to quaternary structure, in plastids the minimal PEP RNA polymerase catalytic core is composed of four subunits: alpha, beta, beta', and beta''. When a (nuclear-encoded) sigma factor is associated with the core the holoenzyme is formed, which can initiate transcription. Requires Mg(2+) as cofactor. The cofactor is Zn(2+).

Its subcellular location is the plastid. The protein resides in the chloroplast. It carries out the reaction RNA(n) + a ribonucleoside 5'-triphosphate = RNA(n+1) + diphosphate. Functionally, DNA-dependent RNA polymerase catalyzes the transcription of DNA into RNA using the four ribonucleoside triphosphates as substrates. In Lepidium virginicum (Virginia pepperweed), this protein is DNA-directed RNA polymerase subunit beta'.